The sequence spans 354 residues: Uroporphyrinogen decarboxylase (354 aa).

Substrate contacts are provided by residues 27–31 (RQAGR), Asp-77, Tyr-154, Thr-209, and His-327.

Belongs to the uroporphyrinogen decarboxylase family. In terms of assembly, homodimer.

The protein resides in the cytoplasm. The enzyme catalyses uroporphyrinogen III + 4 H(+) = coproporphyrinogen III + 4 CO2. Its pathway is porphyrin-containing compound metabolism; protoporphyrin-IX biosynthesis; coproporphyrinogen-III from 5-aminolevulinate: step 4/4. In terms of biological role, catalyzes the decarboxylation of four acetate groups of uroporphyrinogen-III to yield coproporphyrinogen-III. The chain is Uroporphyrinogen decarboxylase from Escherichia coli O17:K52:H18 (strain UMN026 / ExPEC).